The chain runs to 543 residues: MLAALIYTILAILLSVLATSYICIIYGVKRRVLQPVKTKNSTEINHNAYQKYTQAPGPRPWPIIGNLHLLDRYRDSPFAGFTALAQQYGDIYSLTFGHTRCLVVNNLELIREVLNQNGKVMSGRPDFIRYHKLFGGERSNSLALCDWSQLQQKRRNLARRHCSPREFSCFYMKMSQIGCEEMEHWNRELGNQLVPGEPINIKPLILKACANMFSQYMCSLRFDYDDVDFQQIVQYFDEIFWEINQGHPLDFLPWLYPFYQRHLNKIINWSSTIRGFIMERIIRHRELSVDLDEPDRDFTDALLKSLLEDKDVSRNTIIFMLEDFIGGHSAVGNLVMLVLAYIAKNVDIGRRIQEEIDAIIEEENRSINLLDMNAMPYTMATIFEVLRYSSSPIVPHVATEDTVISGYGVTKGTIVFINNYVLNTSEKFWVNPKEFNPLRFLEPSKEQSPKNSKGSDSGIESDNEKLQLKRNIPHFLPFSIGKRTCIGQNLVRGFGFLVVVNVMQRYNISSHNPSTIKISPESLALPADCFPLVLTPREKIGPL.

Ser-219 bears the Phosphoserine mark. The interval 440 to 460 is disordered; sequence FLEPSKEQSPKNSKGSDSGIE. Residues 449–460 show a composition bias toward polar residues; the sequence is PKNSKGSDSGIE. Cys-485 provides a ligand contact to heme.

It belongs to the cytochrome P450 family. Heme is required as a cofactor.

It is found in the endoplasmic reticulum membrane. It localises to the microsome membrane. Functionally, required for correct development of the embryonic midline glial cells which are necessary for the formation of distinct segmental commissures. The chain is Cytochrome P450 307a1 (spo) from Drosophila melanogaster (Fruit fly).